The following is a 528-amino-acid chain: Apolipoprotein N-acyltransferase (528 aa).

Transmembrane regions (helical) follow at residues 8–28 (IMLL…AVGA), 69–89 (AFWI…WWLG), 99–119 (FAWA…VFYG), 178–198 (VLGL…PALL), and 203–223 (GAKL…GYGA). The CN hydrolase domain occupies 241 to 490 (VQPNIDQAAK…EGVENATFTL (250 aa)). The Proton acceptor role is filled by Glu-285. Lys-349 is an active-site residue. Cys-402 functions as the Nucleophile in the catalytic mechanism.

This sequence belongs to the CN hydrolase family. Apolipoprotein N-acyltransferase subfamily.

It is found in the cell inner membrane. It catalyses the reaction N-terminal S-1,2-diacyl-sn-glyceryl-L-cysteinyl-[lipoprotein] + a glycerophospholipid = N-acyl-S-1,2-diacyl-sn-glyceryl-L-cysteinyl-[lipoprotein] + a 2-acyl-sn-glycero-3-phospholipid + H(+). It functions in the pathway protein modification; lipoprotein biosynthesis (N-acyl transfer). Its function is as follows. Catalyzes the phospholipid dependent N-acylation of the N-terminal cysteine of apolipoprotein, the last step in lipoprotein maturation. In Allorhizobium ampelinum (strain ATCC BAA-846 / DSM 112012 / S4) (Agrobacterium vitis (strain S4)), this protein is Apolipoprotein N-acyltransferase.